The following is a 910-amino-acid chain: Eukaryotic translation initiation factor 3 subunit C (910 aa).

Residues 1–21 (MSRFFANGSESESESSEEEIQ) are disordered. Residues 11-20 (SESESSEEEI) show a composition bias toward acidic residues. 4 positions are modified to phosphoserine: serine 34, serine 165, serine 176, and serine 185. Residues 157-279 (FREAPDQESE…IRKRAEDDED (123 aa)) are disordered. Residues 162–186 (DQESEAEDEVVALESDGGDAGDDSD) are compositionally biased toward acidic residues. Low complexity predominate over residues 194–207 (AVPKAVKSAPAKAA). The span at 209-235 (ADDDDSDDSIDWDSDSESETESSDDEN) shows a compositional bias: acidic residues. Residues 240–268 (MRERFLKRTTEKEEKDDDKRKDKRKEQKT) are compositionally biased toward basic and acidic residues. Residues 639-815 (FHMHINLELL…ETVGMHRSEP (177 aa)) enclose the PCI domain. The disordered stretch occupies residues 847 to 910 (FFQRGNMGNR…QQQVQTIDEE (64 aa)). Residues 862–874 (NRNQNNQGGNWLG) are compositionally biased toward low complexity. Over residues 882-891 (RNRNQRGHHK) the composition is skewed to basic residues. Residues 895-910 (DRQQQQQQQVQTIDEE) are compositionally biased toward low complexity.

Belongs to the eIF-3 subunit C family. Component of the eukaryotic translation initiation factor 3 (eIF-3) complex. The eIF-3 complex interacts with pix.

Its subcellular location is the cytoplasm. Component of the eukaryotic translation initiation factor 3 (eIF-3) complex, which is involved in protein synthesis of a specialized repertoire of mRNAs and, together with other initiation factors, stimulates binding of mRNA and methionyl-tRNAi to the 40S ribosome. The eIF-3 complex specifically targets and initiates translation of a subset of mRNAs involved in cell proliferation. This chain is Eukaryotic translation initiation factor 3 subunit C, found in Drosophila melanogaster (Fruit fly).